A 213-amino-acid chain; its full sequence is Protein FAM177A1 (213 aa).

M1 is subject to N-acetylmethionine. S70 carries the phosphoserine modification. T71 carries the phosphothreonine modification. A coiled-coil region spans residues 136–173 (IDEYYRMKKEEEEEEEENRMSEEAEKQYQQNKLQTDSI). The segment at 147-175 (EEEEEENRMSEEAEKQYQQNKLQTDSIVQ) is disordered. The segment covering 162–175 (QYQQNKLQTDSIVQ) has biased composition (polar residues).

This sequence belongs to the FAM177 family.

In Homo sapiens (Human), this protein is Protein FAM177A1 (FAM177A1).